A 103-amino-acid chain; its full sequence is Protamine-3 (103 aa).

The tract at residues 1–103 is disordered; it reads MGSRCAKLNT…QSPEPKRTPS (103 aa). Low complexity predominate over residues 10-21; the sequence is TGQSPGHSPGHS. Residues 50–66 show a composition bias toward acidic residues; it reads GEEEEEEEEEGEEEEKE. Over residues 78 to 90 the composition is skewed to basic and acidic residues; the sequence is EPERQEEGHKDNA. At S95 the chain carries Phosphoserine.

This sequence belongs to the protamine P3 family.

The protein resides in the nucleus. The protein localises to the chromosome. Its function is as follows. Protamines substitute for histones in the chromatin of sperm during the haploid phase of spermatogenesis. They compact sperm DNA into a highly condensed, stable and inactive complex. This Homo sapiens (Human) protein is Protamine-3 (PRM3).